A 313-amino-acid polypeptide reads, in one-letter code: Zinc transporter ZitB (313 aa).

The Cytoplasmic portion of the chain corresponds to 1 to 20; sequence MAHSHSHTSSHLPEDNNARR. The chain crosses the membrane as a helical span at residues 21-41; that stretch reads LLYAFGVTAGFMLVEVVGGFL. At 42-47 the chain is on the periplasmic side; it reads SGSLAL. The chain crosses the membrane as a helical span at residues 48-68; sequence LADAGHMLTDTAALLFALLAV. The Cytoplasmic segment spans residues 69–89; it reads QFSRRPPTIRHTFGWLRLTTL. The helical transmembrane segment at 90–110 threads the bilayer; that stretch reads AAFVNAIALVVITILIVWEAI. The Periplasmic segment spans residues 111 to 121; the sequence is ERFRTPRPVEG. Residues 122–142 traverse the membrane as a helical segment; the sequence is GMMMAIAVAGLLANILSFWLL. The Cytoplasmic segment spans residues 143 to 159; that stretch reads HHGSEEKNLNVRAAALH. Residues 160–180 form a helical membrane-spanning segment; that stretch reads VLGDLLGSVGAIIAALIIIWT. A topological domain (periplasmic) is located at residue Gly-181. A helical transmembrane segment spans residues 182-202; sequence WTPADPILSILVSLLVLRSAW. Over 203 to 313 the chain is Cytoplasmic; the sequence is RLLKDSVNEL…GVSGHSHHHH (111 aa).

This sequence belongs to the cation diffusion facilitator (CDF) transporter (TC 2.A.4) family. SLC30A subfamily.

It is found in the cell inner membrane. Functionally, involved in zinc efflux across the cytoplasmic membrane, thus reducing zinc accumulation in the cytoplasm and rendering bacteria more resistant to zinc. It may contribute to zinc homeostasis at low concentrations of zinc, whereas ZntA is required for growth at more toxic concentrations. The sequence is that of Zinc transporter ZitB (zitB) from Escherichia coli (strain K12).